We begin with the raw amino-acid sequence, 108 residues long: Dormancy-associated protein homolog 1 (108 aa).

Positions Asp28–Lys59 are disordered. A Phosphoserine modification is found at Ser47. Phosphothreonine is present on Thr50.

Belongs to the DRM1/ARP family. Expressed mainly in the low bolt.

This chain is Dormancy-associated protein homolog 1, found in Arabidopsis thaliana (Mouse-ear cress).